The primary structure comprises 276 residues: Protein canopy homolog 3 (276 aa).

The first 16 residues, M1–A16, serve as a signal peptide directing secretion. Residues N30–L269 form the Saposin B-type domain. 3 disulfide bridges follow: C32-C190, C35-C178, and C88-C150. Residues N137–E162 adopt a coiled-coil conformation. The tract at residues A206 to L276 is disordered. Basic residues-rich tracts occupy residues K210 to G219 and K228 to S239. A compositionally biased stretch (basic and acidic residues) spans K240 to E252.

Belongs to the canopy family.

It is found in the endoplasmic reticulum. Functionally, toll-like receptor (TLR)-specific co-chaperone for HSP90B1. Required for proper TLR folding and hence controls TLR exit from the endoplasmic reticulum. Consequently, required for immune responses. This chain is Protein canopy homolog 3 (cnpy3), found in Danio rerio (Zebrafish).